The sequence spans 276 residues: Protein canopy homolog 3 (276 aa).

The first 26 residues, 1–26 (MESMSELAPRCLLFPLLLLLPLLLLP), serve as a signal peptide directing secretion. One can recognise a Saposin B-type domain in the interval 47 to 269 (SKCEVCKYVA…EGVQKASPLP (223 aa)). Intrachain disulfides connect Cys-49/Cys-206, Cys-52/Cys-194, and Cys-104/Cys-166. Asn-153 carries N-linked (GlcNAc...) asparagine glycosylation. A coiled-coil region spans residues 153–179 (NETSAEVADLKKQCDVLVEEFEEVIED). Positions 218 to 276 (IASLGGKKSKKKRSGVKGSSSGSSKQRKELGGLGEDANAEEEEGVQKASPLPHSPPDEL) are disordered.

This sequence belongs to the canopy family. Interacts with HSP90B1; this interaction is disrupted in the presence of ATP. Interacts with TLR1, TLR2, TLR4 and TLR9. Strongest interaction with TLR4.

Its subcellular location is the endoplasmic reticulum. Functionally, toll-like receptor (TLR)-specific co-chaperone for HSP90B1. Required for proper TLR folding, except that of TLR3, and hence controls TLR exit from the endoplasmic reticulum. Consequently, required for both innate and adaptive immune responses. The sequence is that of Protein canopy homolog 3 (Cnpy3) from Mus musculus (Mouse).